A 438-amino-acid chain; its full sequence is Battenin (438 aa).

The disordered stretch occupies residues 1-29 (MGGCAGSRRRLLDSEEEETAPEPRPPRSY). Residues 1–37 (MGGCAGSRRRLLDSEEEETAPEPRPPRSYHKGALWKN) are Cytoplasmic-facing. Residue serine 14 is modified to Phosphoserine. The helical transmembrane segment at 38-58 (VMGFWLLGLCNNFSYVVMLSA) threads the bilayer. Over 59-127 (AHDILSHQRA…GLHLLPYSPR (69 aa)) the chain is Lumenal. The segment at 68–89 (ASGNQSHVDPDPPPTAHNSSSR) is disordered. N-linked (GlcNAc...) asparagine glycans are attached at residues asparagine 71 and asparagine 85. Residues 128-148 (VLVSGICAAGSFILVAFSHSV) traverse the membrane as a helical segment. At 149–151 (GTS) the chain is on the cytoplasmic side. Residues 152–172 (LCGVVLASISSGVGEVTFLSL) traverse the membrane as a helical segment. Residues 173–182 (TAFYPRAVIS) lie on the Lumenal side of the membrane. A helical transmembrane segment spans residues 183 to 203 (WWSSGTGGAGLMGALSYLGLT). Residues 204-277 (QAGLSPQHTL…NLSLQERWTV (74 aa)) lie on the Cytoplasmic side of the membrane. The tract at residues 236 to 267 (PQDPGGEEEAETSARQPLIDSETPESKPDSSS) is disordered. The short motif at 242–244 (EEE) is the Lysosomal targeting motif element. Positions 253-254 (LI) match the Lysosomal targeting motif. Required for AP1G1, AP2A2 and AP3D1 interaction motif. The chain crosses the membrane as a helical span at residues 278–298 (FKGLLWYIVPLVLVYFAEYFI). Topologically, residues 299–346 (NQGLFELLFFRNTSLNHAQQYRWYQMLYQAGVFVSRSSLHCCRIRFTW) are lumenal. N-linked (GlcNAc...) asparagine glycosylation occurs at asparagine 310. A helical transmembrane segment spans residues 347–367 (VLALLQCLNLAFLLVDVWFSF). At 368–438 (LPSIYLVFLI…PLHDFLCHLS (71 aa)) the chain is on the cytoplasmic side. The Lysosomal targeting motif signature appears at 409-419 (MAAACISDTLG). Cysteine methyl ester is present on cysteine 435. The S-farnesyl cysteine moiety is linked to residue cysteine 435. The propeptide at 436–438 (HLS) is removed in mature form.

The protein belongs to the battenin family. Interacts with DCTN1, KIF3A, RAB7A and RILP. Interacts with CLN5. Post-translationally, highly glycosylated. Farnesylation is important for trafficking to lysosomes.

It localises to the lysosome membrane. Its subcellular location is the late endosome. The protein resides in the lysosome. Its function is as follows. Mediates microtubule-dependent, anterograde transport connecting the Golgi network, endosomes, autophagosomes, lysosomes and plasma membrane, and participates in several cellular processes such as regulation of lysosomal pH, lysosome protein degradation, receptor-mediated endocytosis, autophagy, transport of proteins and lipids from the TGN, apoptosis and synaptic transmission. Facilitates the proteins transport from trans-Golgi network (TGN)-to other membrane compartments such as transport of microdomain-associated proteins to the plasma membrane, IGF2R transport to the lysosome where it regulates the CTSD release leading to regulation of CTSD maturation and thereby APP intracellular processing. Moreover regulates CTSD activity in response to osmotic stress. Also binds galactosylceramide and transports it from the trans Golgi to the rafts, which may have immediate and downstream effects on cell survival by modulating ceramide synthesis. At the plasma membrane, regulates actin-dependent events including filopodia formation, cell migration, and pinocytosis through ARF1-CDC42 pathway and also the cytoskeleton organization through interaction with MYH10 and fodrin leading to the regulation of the plasma membrane association of Na+, K+ ATPase complex. Regulates synaptic transmission in the amygdala, hippocampus, and cerebellum through regulation of synaptic vesicles density and their proximity to active zones leading to modulation of short-term plasticity and age-dependent anxious behavior, learning and memory. Regulates autophagic vacuoles (AVs) maturation by modulating the trafficking between endocytic and autophagolysosomal/lysosomal compartments, which involves vesicle fusion leading to regulation of degradation process. Also participates in cellular homeostasis of compounds such as, water, ions, amino acids, proteins and lipids in several tissue namely in brain and kidney through regulation of their transport and synthesis. In Canis lupus familiaris (Dog), this protein is Battenin.